The sequence spans 460 residues: Kynureninase (460 aa).

Residues Leu116, Thr117, 144 to 147 (FPSD), Ser199, Asp228, His231, and Tyr253 each bind pyridoxal 5'-phosphate. Lys254 carries the post-translational modification N6-(pyridoxal phosphate)lysine. 2 residues coordinate pyridoxal 5'-phosphate: Trp288 and Asn316.

Belongs to the kynureninase family. In terms of assembly, homodimer. Requires pyridoxal 5'-phosphate as cofactor.

The protein localises to the cytoplasm. It carries out the reaction L-kynurenine + H2O = anthranilate + L-alanine + H(+). The enzyme catalyses 3-hydroxy-L-kynurenine + H2O = 3-hydroxyanthranilate + L-alanine + H(+). The protein operates within amino-acid degradation; L-kynurenine degradation; L-alanine and anthranilate from L-kynurenine: step 1/1. It functions in the pathway cofactor biosynthesis; NAD(+) biosynthesis; quinolinate from L-kynurenine: step 2/3. Functionally, catalyzes the cleavage of L-kynurenine (L-Kyn) and L-3-hydroxykynurenine (L-3OHKyn) into anthranilic acid (AA) and 3-hydroxyanthranilic acid (3-OHAA), respectively. This chain is Kynureninase, found in Debaryomyces hansenii (strain ATCC 36239 / CBS 767 / BCRC 21394 / JCM 1990 / NBRC 0083 / IGC 2968) (Yeast).